The primary structure comprises 852 residues: MSSVSPIQIPSRLPLLLTHEGVLLPGSTMRTSVDSARNLQLVRSRLLKGTSLQSTILGVIPNTPDPASDAQDLPPLHRIGTAALAVQVVGSNWPKPHYTLLITGLCRFQIVQVLKEKPYPIAEVEQLDRLEEFPNTCKMREELGELSEQFYKYAVQLVEMLDMSVPAVAKLRRLLDSLPREALPDILTSIIRTSNKEKLQILDAVSLEERFKMTIPLLVRQIEGLKLLQKTRKPKQDDDKRVIAIRPIRRITHISGTLEDEDEDEDNDDIVMLEKKIRTSSMPEQAHKVCVKEIKRLKKMPQSMPEYALTRNYLELMVELPWNKSTTDRLDIRAARILLDNDHYAMEKLKKRVLEYLAVRQLKNNLKGPILCFVGPPGVGKTSVGRSVAKTLGREFHRIALGGVCDQSDIRGHRRTYVGSMPGRIINGLKTVGVNNPVFLLDEVDKLGKSLQGDPAAALLEVLDPEQNHNFTDHYLNVAFDLSQVLFIATANTTATIPAALLDRMEIIQVPGYTQEEKIEIAHRHLIPKQLEQHGLTPQQIQIPQVTTLDIITRYTREAGVRSLDRKLGAICRAVAVKVAEGQHKEAKLDRSDVTEREGCREHILEDEKPESISDTTDLALPPEMPILIDFHALKDILGPPMYEMEVSQRLSQPGVAIGLAWTPLGGEIMFVEASRMDGEGQLTLTGQLGDVMKESAHLAISWLRSNAKKYQLTNAFGSFDLLDNTDIHLHFPAGAVTKDGPSAGVTIVTCLASLFSGRLVRSDVAMTGEITLRGLVLPVGGIKDKVLAAHRAGLKQVIIPRRNEKDLEGIPGNVRQDLSFVTASCLDEVLNAAFDGGFTVKTRPGLLNSKL.

Ser2 bears the N-acetylserine mark. In terms of domain architecture, Lon N-terminal spans Leu13–Ile222. Gly375–Thr382 is a binding site for ATP. The Lon proteolytic domain occupies Leu651 to Gly837. Catalysis depends on residues Ser743 and Lys786. The Microbody targeting signal signature appears at Ser850–Leu852.

Belongs to the peptidase S16 family. Interacts with PEX5. Interacts with TYSND1. May interact with enzymes involved in beta-oxidation of fatty acids, including ACOX1/AOX. In terms of tissue distribution, widely expressed, with high levels in the liver, kidney and pancreas.

The protein resides in the peroxisome matrix. The enzyme catalyses Hydrolysis of proteins in presence of ATP.. In terms of biological role, ATP-dependent serine protease that mediates the selective degradation of misfolded and unassembled polypeptides in the peroxisomal matrix. Necessary for type 2 peroxisome targeting signal (PTS2)-containing protein processing and facilitates peroxisome matrix protein import. May indirectly regulate peroxisomal fatty acid beta-oxidation through degradation of the self-processed forms of TYSND1. The polypeptide is Lon protease homolog 2, peroxisomal (Homo sapiens (Human)).